Reading from the N-terminus, the 458-residue chain is MKLWGGRFEKNTDKSVDDFNSSIRFDCRMYKQDILGSIAHAKMLGKCKIISEEDSILIQNTLREILKDIEEGKVQFEIDAEDIHMNVEKILISRIGDVGKKLHTGRSRNDQVALDIRMYLRDEVVEIRKLLVNLERTLIEIAKNNIDTILPGYTHLQRAQPITFAHHMMAYFQMFKRDIERLNDCYKRINVMPLGSGALASTTYPLDRYMVAKELGFDSITENSLDAVSDRDFVIELSACLSILMMHLSRFSEEIILWASHEFGFIELDDAYSTGSSIMPQKKNPDVAELVRGKTGRVYGDLMALLSVMKSLPLAYNKDMQEDKEAIFDAVDTVKMCLPVFTKMIETMKIKKENMLRAAQGGFTNATDMADYLVKKGIPFRNAHEIIGKMVLYCIENNKAIEELDMSEFKSFSELIEEDVYEEISLSKCVSGRNLPGGPAKESVMASIENGLKFLSTQ.

This sequence belongs to the lyase 1 family. Argininosuccinate lyase subfamily.

Its subcellular location is the cytoplasm. The catalysed reaction is 2-(N(omega)-L-arginino)succinate = fumarate + L-arginine. Its pathway is amino-acid biosynthesis; L-arginine biosynthesis; L-arginine from L-ornithine and carbamoyl phosphate: step 3/3. This chain is Argininosuccinate lyase, found in Acetivibrio thermocellus (strain ATCC 27405 / DSM 1237 / JCM 9322 / NBRC 103400 / NCIMB 10682 / NRRL B-4536 / VPI 7372) (Clostridium thermocellum).